The following is a 540-amino-acid chain: Gamma-cadinene synthase (540 aa).

Mg(2+) is bound by residues Asp-292, Asp-296, Asp-436, Ser-440, and Glu-444. The DDXXD motif signature appears at 292–296 (DDTYD).

Belongs to the terpene synthase family. Mg(2+) is required as a cofactor. Requires Mn(2+) as cofactor.

The catalysed reaction is (2E,6E)-farnesyl diphosphate = (+)-gamma-cadinene + diphosphate. Its pathway is secondary metabolite biosynthesis; terpenoid biosynthesis. Its function is as follows. Sesquiterpene synthase that catalyzes the cyclization of trans,trans-farnesyl diphosphate (FPP) to gamma cadinene. In Ocimum basilicum (Sweet basil), this protein is Gamma-cadinene synthase (CDS).